The chain runs to 287 residues: Protein-export membrane protein SecF (287 aa).

6 helical membrane passes run 21–41, 129–149, 158–178, 182–202, 226–246, and 259–279; these read LIAI…FNGL, QIYW…FIIF, VILA…LFGI, LASV…DILL, VTMS…TVFV, and VLII…LGIL.

It belongs to the SecD/SecF family. SecF subfamily. Part of the protein translocation apparatus. Forms a complex with SecD.

The protein resides in the cell membrane. Its function is as follows. Involved in protein export. The polypeptide is Protein-export membrane protein SecF (Methanothermobacter thermautotrophicus (strain ATCC 29096 / DSM 1053 / JCM 10044 / NBRC 100330 / Delta H) (Methanobacterium thermoautotrophicum)).